The primary structure comprises 785 residues: Cadherin-7 (785 aa).

A signal peptide spans 1–27 (MKLGKVELCHFLQLIALFLCFSGMSQA). Positions 28 to 47 (ELPRSRSKPYFQSGRSRTKR) are excised as a propeptide. The Extracellular segment spans residues 28–607 (ELPRSRSKPY…AYVLPAGLST (580 aa)). 5 consecutive Cadherin domains span residues 49–153 (WVWN…EPKF), 154–262 (LDGP…PPRF), 263–377 (PRRS…PPVF), 378–482 (SSPL…APEF), and 482–599 (FAMD…AEAY). 2 N-linked (GlcNAc...) asparagine glycosylation sites follow: Asn-449 and Asn-530. The helical transmembrane segment at 608–628 (GALIAILACVLTLLVLILLIV) threads the bilayer. Residues 629–785 (TMRRRKKEPL…YGNGQESLYS (157 aa)) are Cytoplasmic-facing.

It localises to the cell membrane. Its function is as follows. Cadherins are calcium-dependent cell adhesion proteins. They preferentially interact with themselves in a homophilic manner in connecting cells; cadherins may thus contribute to the sorting of heterogeneous cell types. In Mus musculus (Mouse), this protein is Cadherin-7 (Cdh7).